A 443-amino-acid polypeptide reads, in one-letter code: UDP-N-acetylmuramate--L-alanine ligase (443 aa).

111–117 (GAHGKTS) contacts ATP.

This sequence belongs to the MurCDEF family.

The protein localises to the cytoplasm. The enzyme catalyses UDP-N-acetyl-alpha-D-muramate + L-alanine + ATP = UDP-N-acetyl-alpha-D-muramoyl-L-alanine + ADP + phosphate + H(+). It participates in cell wall biogenesis; peptidoglycan biosynthesis. Its function is as follows. Cell wall formation. This Levilactobacillus brevis (strain ATCC 367 / BCRC 12310 / CIP 105137 / JCM 1170 / LMG 11437 / NCIMB 947 / NCTC 947) (Lactobacillus brevis) protein is UDP-N-acetylmuramate--L-alanine ligase.